The chain runs to 92 residues: Serine rich endogenous peptide 11 (92 aa).

A signal peptide spans 1–29; that stretch reads MENNTFSSKSINLLILLLLLCTFLCQTES. The tract at residues 50-92 is disordered; that stretch reads PNTDIGTPSSTSDRGGGGNGRRLMSQMDVGASSSGQGGGRNRH. Polar residues predominate over residues 53-62; that stretch reads DIGTPSSTSD. 2 short sequence motifs (SCOOP motif) span residues 53–67 and 75–89; these read DIGT…GGGG and QMDV…GGGR. 2 short sequence motifs (sxS motif essential for MIK2 binding) span residues 59-61 and 81-83; these read STS and SSS.

It belongs to the serine rich endogenous peptide (SCOOP) phytocytokine family. In terms of assembly, interacts with MIK2 (via extracellular leucine-rich repeat domain); this interaction triggers the formation of complex between MIK2 and the BAK1/SERK3 and SERK4 coreceptors, and subsequent BAK1 activation by phosphorylation. Mostly expressed in seedlings shoots and roots, and, to a lower extent, in leaves.

Its subcellular location is the cell membrane. It is found in the secreted. It localises to the extracellular space. The protein localises to the apoplast. Functionally, brassicaceae-specific phytocytokine (plant endogenous peptide released into the apoplast) perceived by MIK2 in a BAK1/SERK3 and SERK4 coreceptors-dependent manner, that modulates various physiological and antimicrobial processes including growth prevention and reactive oxygen species (ROS) response regulation. The chain is Serine rich endogenous peptide 11 from Arabidopsis thaliana (Mouse-ear cress).